The following is a 332-amino-acid chain: Palmitoyltransferase PFA3 (332 aa).

At 1-13 (MNLVNNFSKLFPR) the chain is on the cytoplasmic side. A helical transmembrane segment spans residues 14-34 (CLTTGLYLWSLYAIVVCIHVI). Topologically, residues 35 to 37 (RAR) are lumenal. The chain crosses the membrane as a helical span at residues 38 to 58 (VVLPLVFTIAMVALYTYAKLI). Over 59-147 (YVGPGTTKEY…AGCVGYRNQK (89 aa)) the chain is Cytoplasmic. The region spanning 104 to 154 (RVCKSCSSWKPDRCHHCSTCNVCVLKMDHHCPWFAGCVGYRNQKFFIQFLI) is the DHHC domain. A helical transmembrane segment spans residues 148–168 (FFIQFLIYCTVYSILVLILSS). The Lumenal portion of the chain corresponds to 169-188 (MEIYTWFKGEFFEVELINFT). The helical transmembrane segment at 189-209 (LLSLWLLALVVSISITIFTVF) threads the bilayer. Residues 210–332 (SISQVCQNQT…SLDVDRSNFV (123 aa)) are Cytoplasmic-facing.

It belongs to the DHHC palmitoyltransferase family. PFA3 subfamily. Post-translationally, autopalmitoylated.

It localises to the vacuole membrane. It catalyses the reaction L-cysteinyl-[protein] + hexadecanoyl-CoA = S-hexadecanoyl-L-cysteinyl-[protein] + CoA. Functionally, palmitoyltransferase specific for VAC8. Palmitoylates VAC8 at one or more of its N-terminal cysteine residues, which is required for its proper membrane localization. The chain is Palmitoyltransferase PFA3 (PFA3) from Candida glabrata (strain ATCC 2001 / BCRC 20586 / JCM 3761 / NBRC 0622 / NRRL Y-65 / CBS 138) (Yeast).